The chain runs to 273 residues: Homeobox protein Nkx-2.2 (273 aa).

Disordered regions lie at residues 1–56 and 91–131; these read MSLT…LDAV and AASA…KRKR. Residues 20–38 show a composition bias toward acidic residues; that stretch reads DTNDEEGSVAEGPEEESEG. Positions 128–187 form a DNA-binding region, homeobox; sequence KRKRRVLFSKAQTYELERRFRQQRYLSAPEREHLASLIRLTPTQVKIWFQNHRYKMKRAR.

Belongs to the NK-2 homeobox family. Interacts with OLIG2.

The protein localises to the nucleus. Functionally, transcriptional activator involved in the development of insulin-producting beta cells in the endocrine pancreas. May also be involved in specifying diencephalic neuromeric boundaries, and in controlling the expression of genes that play a role in axonal guidance. Binds to elements within the NEUROD1 promoter. The polypeptide is Homeobox protein Nkx-2.2 (NKX2-2) (Mesocricetus auratus (Golden hamster)).